A 220-amino-acid chain; its full sequence is UPF0502 protein VV2_0756 (220 aa).

This sequence belongs to the UPF0502 family.

This Vibrio vulnificus (strain CMCP6) protein is UPF0502 protein VV2_0756.